Consider the following 94-residue polypeptide: Late cornified envelope protein 3C (94 aa).

Over residues 1-10 (MSCQQNQQQC) the composition is skewed to low complexity. Disordered stretches follow at residues 1-35 (MSCQ…PPSS) and 65-94 (CRRQ…GGCC). Pro residues predominate over residues 11 to 34 (QPPPSCPSPKCPPKSPAQCLPPPS). Over residues 78–94 (GQQGGGSCRGHGSGGCC) the composition is skewed to gly residues.

It belongs to the LCE family. In terms of assembly, interacts with CYSRT1; the interaction is direct. Skin-specific. Expression was readily detected in adult trunk skin, adult arm skin, fetal skin, penal skin, vulva, esophagus and tongue. Not expressed in the cervix, rectum, lung, colon, or placenta.

In terms of biological role, a structural component of the cornified envelope of the stratum corneum involved in innate cutaneous host defense. Possesses defensin-like antimicrobial activity against a broad spectrum of Gram-positive and Gram-negative bacteria, both aerobic and anaerobic species. Upon inflammation, may regulate skin barrier repair by shaping cutaneous microbiota composition and immune response to bacterial antigens. This chain is Late cornified envelope protein 3C, found in Homo sapiens (Human).